A 323-amino-acid chain; its full sequence is GTP 3',8-cyclase (323 aa).

In terms of domain architecture, Radical SAM core spans 5–228 (GFGRKVDYLR…TVLRDTSSPA (224 aa)). R14 lines the GTP pocket. Positions 21 and 25 each coordinate [4Fe-4S] cluster. Y27 is an S-adenosyl-L-methionine binding site. [4Fe-4S] cluster is bound at residue C28. R64 serves as a coordination point for GTP. Residue G68 coordinates S-adenosyl-L-methionine. T95 lines the GTP pocket. S-adenosyl-L-methionine is bound at residue S119. A GTP-binding site is contributed by K155. M189 lines the S-adenosyl-L-methionine pocket. 2 residues coordinate [4Fe-4S] cluster: C250 and C253. 255-257 (RIR) lines the GTP pocket. A [4Fe-4S] cluster-binding site is contributed by C267. Basic and acidic residues predominate over residues 302-313 (KNKWSQKDDNEV). Positions 302–323 (KNKWSQKDDNEVSTRAFYQTGG) are disordered.

The protein belongs to the radical SAM superfamily. MoaA family. Monomer and homodimer. It depends on [4Fe-4S] cluster as a cofactor.

The enzyme catalyses GTP + AH2 + S-adenosyl-L-methionine = (8S)-3',8-cyclo-7,8-dihydroguanosine 5'-triphosphate + 5'-deoxyadenosine + L-methionine + A + H(+). The protein operates within cofactor biosynthesis; molybdopterin biosynthesis. Catalyzes the cyclization of GTP to (8S)-3',8-cyclo-7,8-dihydroguanosine 5'-triphosphate. In Aliarcobacter butzleri (strain RM4018) (Arcobacter butzleri), this protein is GTP 3',8-cyclase.